The chain runs to 116 residues: Large ribosomal subunit protein bL17 (116 aa).

The protein belongs to the bacterial ribosomal protein bL17 family. Part of the 50S ribosomal subunit. Contacts protein L32.

The chain is Large ribosomal subunit protein bL17 from Prochlorococcus marinus (strain MIT 9312).